The sequence spans 426 residues: Spermatogenesis-associated protein 2-like protein (426 aa).

4 disordered regions span residues 204-223 (AQDE…TYGA), 234-256 (DESS…PVEL), 269-300 (LWGS…EELE), and 316-347 (SRSG…ASSA). A phosphoserine mark is found at S318 and S326.

The protein belongs to the SPATA2 family.

The polypeptide is Spermatogenesis-associated protein 2-like protein (Mus musculus (Mouse)).